We begin with the raw amino-acid sequence, 158 residues long: Transcription elongation factor GreA (158 aa).

Residues 47–74 (AEYHAAKEEQSHNEGRIAELEDKLARAD) are a coiled coil.

It belongs to the GreA/GreB family.

Its function is as follows. Necessary for efficient RNA polymerase transcription elongation past template-encoded arresting sites. The arresting sites in DNA have the property of trapping a certain fraction of elongating RNA polymerases that pass through, resulting in locked ternary complexes. Cleavage of the nascent transcript by cleavage factors such as GreA or GreB allows the resumption of elongation from the new 3'terminus. GreA releases sequences of 2 to 3 nucleotides. The sequence is that of Transcription elongation factor GreA from Nitrobacter winogradskyi (strain ATCC 25391 / DSM 10237 / CIP 104748 / NCIMB 11846 / Nb-255).